A 92-amino-acid chain; its full sequence is Cell division topological specificity factor (92 aa).

This sequence belongs to the MinE family.

Functionally, prevents the cell division inhibition by proteins MinC and MinD at internal division sites while permitting inhibition at polar sites. This ensures cell division at the proper site by restricting the formation of a division septum at the midpoint of the long axis of the cell. This Syntrophobacter fumaroxidans (strain DSM 10017 / MPOB) protein is Cell division topological specificity factor.